We begin with the raw amino-acid sequence, 43 residues long: uncharacterized protein (43 aa).

An N-terminal signal peptide occupies residues methionine 1 to serine 16. Asparagine 37 carries N-linked (GlcNAc...) asparagine; by host glycosylation.

This is an uncharacterized protein from Acheta domesticus (House cricket).